The sequence spans 192 residues: 3-hydroxyanthranilate 3,4-dioxygenase 1 (192 aa).

O2 is bound at residue Arg-50. Fe cation contacts are provided by His-54, Glu-60, and His-102. Glu-60 serves as a coordination point for substrate. Substrate-binding residues include Arg-106 and Glu-116. Residues Cys-131, Cys-134, Cys-168, and Cys-171 each coordinate a divalent metal cation.

The protein belongs to the 3-HAO family. Fe(2+) is required as a cofactor.

Its subcellular location is the cytoplasm. The catalysed reaction is 3-hydroxyanthranilate + O2 = (2Z,4Z)-2-amino-3-carboxymuconate 6-semialdehyde. Its pathway is cofactor biosynthesis; NAD(+) biosynthesis; quinolinate from L-kynurenine: step 3/3. Functionally, catalyzes the oxidative ring opening of 3-hydroxyanthranilate to 2-amino-3-carboxymuconate semialdehyde, which spontaneously cyclizes to quinolinate. This chain is 3-hydroxyanthranilate 3,4-dioxygenase 1 (bna1-1), found in Aspergillus oryzae (strain ATCC 42149 / RIB 40) (Yellow koji mold).